A 420-amino-acid polypeptide reads, in one-letter code: Serine hydroxymethyltransferase (420 aa).

Residues Leu123 and 127–129 (GHL) contribute to the (6S)-5,6,7,8-tetrahydrofolate site. Lys232 is subject to N6-(pyridoxal phosphate)lysine. Residue 357 to 359 (SPF) participates in (6S)-5,6,7,8-tetrahydrofolate binding.

Belongs to the SHMT family. As to quaternary structure, homodimer. Pyridoxal 5'-phosphate serves as cofactor.

It is found in the cytoplasm. It carries out the reaction (6R)-5,10-methylene-5,6,7,8-tetrahydrofolate + glycine + H2O = (6S)-5,6,7,8-tetrahydrofolate + L-serine. It participates in one-carbon metabolism; tetrahydrofolate interconversion. Its pathway is amino-acid biosynthesis; glycine biosynthesis; glycine from L-serine: step 1/1. In terms of biological role, catalyzes the reversible interconversion of serine and glycine with tetrahydrofolate (THF) serving as the one-carbon carrier. This reaction serves as the major source of one-carbon groups required for the biosynthesis of purines, thymidylate, methionine, and other important biomolecules. Also exhibits THF-independent aldolase activity toward beta-hydroxyamino acids, producing glycine and aldehydes, via a retro-aldol mechanism. The protein is Serine hydroxymethyltransferase of Streptococcus pyogenes serotype M2 (strain MGAS10270).